A 146-amino-acid polypeptide reads, in one-letter code: Hemoglobin subunit beta (146 aa).

Residue valine 1 is modified to N-acetylvaline. The 145-residue stretch at 2-146 (HLTGEEKSTV…VATALAHKYH (145 aa)) folds into the Globin domain. Serine 44 bears the Phosphoserine mark. The residue at position 59 (lysine 59) is an N6-acetyllysine. Residue histidine 63 participates in heme b binding. An N6-acetyllysine modification is found at lysine 82. Residue histidine 92 coordinates heme b. Position 93 is an S-nitrosocysteine (cysteine 93). Residue lysine 144 is modified to N6-acetyllysine.

The protein belongs to the globin family. As to quaternary structure, heterotetramer of two alpha chains and two beta chains. Red blood cells.

Involved in oxygen transport from the lung to the various peripheral tissues. The protein is Hemoglobin subunit beta (HBB) of Macrotus californicus (Californian leaf-nosed bat).